An 87-amino-acid chain; its full sequence is Protein OPG096 (87 aa).

Helical transmembrane passes span proline 39–valine 59 and glutamine 67–leucine 87.

It belongs to the orthopoxvirus OPG096 family. As to quaternary structure, interacts with OPG158.

The protein localises to the virion membrane. It is found in the host cytoplasm. The protein resides in the host endoplasmic reticulum membrane. Functionally, early protein involved in virion morphogenesis. Participates in the formation and elongation of crescent-shaped membrane precursors of immature virions in cytoplasmic factories. This chain is Protein OPG096 (OPG096), found in Homo sapiens (Human).